Consider the following 1029-residue polypeptide: Tyrosine-protein kinase-like otk (1029 aa).

An N-terminal signal peptide occupies residues 1-18; that stretch reads MISIYGLVMALMMASVLA. Residues 19–577 are Extracellular-facing; sequence SSSRFQRVPQ…GGDGFLVTRA (559 aa). Ig-like C2-type domains follow at residues 21–104, 105–195, 247–361, 364–459, and 464–554; these read SRFQ…REAS, PPAK…RVMS, PEDL…APIS, PGIL…VAIN, and PKFS…VQLV. Asn-35 is a glycosylation site (N-linked (GlcNAc...) asparagine). 4 cysteine pairs are disulfide-bonded: Cys-42/Cys-91, Cys-133/Cys-184, Cys-272/Cys-350, and Cys-395/Cys-443. N-linked (GlcNAc...) asparagine glycosylation is found at Asn-332, Asn-413, Asn-425, Asn-440, Asn-453, Asn-508, and Asn-520. A disulfide bridge links Cys-486 with Cys-538. Residues 578 to 598 traverse the membrane as a helical segment; sequence VLITMTVALAYIVLVVGLMLW. Over 599–1029 the chain is Cytoplasmic; it reads CRYRRQARKA…LSKAMQIAEK (431 aa). Disordered regions lie at residues 613–675 and 714–756; these read LSTK…KKSA and SPSD…KTSM. The span at 651-669 shows a compositional bias: polar residues; the sequence is KSSGDAQKSDDTACSQQSR. Ser-674 carries the post-translational modification Phosphoserine. In terms of domain architecture, Protein kinase; inactive spans 688–1024; it reads LSELIQIGRG…QLGAALSKAM (337 aa). The segment covering 716–727 has biased composition (basic and acidic residues); that stretch reads SDKDADTEKQHS.

This sequence belongs to the protein kinase superfamily. Tyr protein kinase family. Insulin receptor subfamily. As to quaternary structure, interacts with plexA; component of a receptor complex that mediates the repulsive signaling in response to Semaphorin ligands.

It localises to the cell membrane. Functionally, acts as a calcium-dependent, homophilic cell adhesion molecule that regulates neural recognition during the development of the nervous system. Component of the repulsive Plexin signaling response to regulate motor axon guidance at the embryonic stage. Also component of a receptor complex that is required in the adult visual system to innervate the lamina layer; specific targeting of R1-R6 axons. This Drosophila sechellia (Fruit fly) protein is Tyrosine-protein kinase-like otk.